The primary structure comprises 236 residues: Small ribosomal subunit protein uS2c (236 aa).

It belongs to the universal ribosomal protein uS2 family.

It is found in the plastid. The protein localises to the chloroplast. This Acorus calamus var. americanus (American sweet flag) protein is Small ribosomal subunit protein uS2c (rps2).